The chain runs to 588 residues: Intracellular maltogenic amylase (588 aa).

Ca(2+) is bound by residues Asn-149, Ser-155, Gly-174, and Asp-176. Substrate contacts are provided by His-249 and Arg-325. Asp-327 functions as the Nucleophile in the catalytic mechanism. The active-site Proton donor is Glu-356. Substrate contacts are provided by residues 422–423 (HD), Asp-467, and Arg-471.

It belongs to the glycosyl hydrolase 13 family. BbmA subfamily. Monomer or homodimer; in equilibrium. Ca(2+) serves as cofactor.

Its subcellular location is the cytoplasm. Its function is as follows. Hydrolyzes beta-cyclodextrin to maltose and glucose, soluble starch to maltose and glucose, and pullulan to panose with trace amounts of maltose and glucose. It is also able to hydrolyze acarbose. Can also exhibit a transglycosylation activity transferring glucose or maltose to another moiety of sugars by forming alpha-(1,6)- and alpha-(1,3)-glycosidic linkages upon the hydrolysis of substrate at concentrations of 5% or higher. In Bacillus subtilis, this protein is Intracellular maltogenic amylase (bbmA).